Reading from the N-terminus, the 248-residue chain is 14-3-3 protein gamma-2 (248 aa).

Belongs to the 14-3-3 family. Homodimer, and heterodimer with other family members. As to expression, expressed in brain, gill, heart, intestine, kidney, liver, ovary, skeletal muscle, spleen and testis.

It localises to the cytoplasm. Its function is as follows. Adapter protein implicated in the regulation of a large spectrum of both general and specialized signaling pathways. Binds to a large number of partners, usually by recognition of a phosphoserine or phosphothreonine motif. Binding generally results in the modulation of the activity of the binding partner. The sequence is that of 14-3-3 protein gamma-2 from Oncorhynchus mykiss (Rainbow trout).